The sequence spans 1231 residues: Protein FAM193A (1231 aa).

The stretch at 106 to 142 (CTEDMYSTLLQRYQRSEEELRKVAEEWLECQKRIDAY) forms a coiled coil. The interval 249–272 (DYLSEMRPPSVSSASSGSGSSSPI) is disordered. Over residues 258–270 (SVSSASSGSGSSS) the composition is skewed to low complexity. Ser-293 bears the Phosphoserine mark. Disordered stretches follow at residues 331 to 405 (NGGG…QAEQ), 633 to 703 (QSSS…APSF), 719 to 789 (SFCP…NQKE), 826 to 845 (LTKRKEEQPKKMEQISEREG), and 860 to 1174 (NSSE…SSLD). The span at 355–365 (EADDEDADGES) shows a compositional bias: acidic residues. Ser-648 is subject to Phosphoserine. Low complexity predominate over residues 676-691 (LAPLPALSPSALSPAS). Acidic residues predominate over residues 761-773 (QQDDGDESADEDS). Low complexity predominate over residues 776-785 (EHSSSTSTST). Residues 872–881 (AAKRARHKQR) show a composition bias toward basic residues. A coiled-coil region spans residues 877–973 (RHKQRKLEEK…ATESISNSEN (97 aa)). Positions 882–909 (KLEEKARLEAEARAREHLHHQEEQKQRE) are enriched in basic and acidic residues. The segment covering 910 to 920 (EEEDEEEEDEE) has biased composition (acidic residues). Positions 921-935 (QHFKEEFQRLQELQK) are enriched in basic and acidic residues. Over residues 937 to 946 (RAAKKKKKDR) the composition is skewed to basic residues. A compositionally biased stretch (polar residues) spans 962–979 (QAATESISNSENIHNGSL). Ser-1136 and Ser-1151 each carry phosphoserine. Basic residues predominate over residues 1156 to 1166 (GKNKKNKKKKG).

It belongs to the FAM193 family.

In Mus musculus (Mouse), this protein is Protein FAM193A (Fam193a).